A 251-amino-acid chain; its full sequence is MDFIVVKRSRKKKNGRGKFPKVSNTITQGDTDLWSQDTLQRKLDNSREKLEYSEFLKSVQSQLSEFKDPIHKCIILGLGRIHTLTASLQLSLFFEIMKIFNLQPRFCSFYDPAFLKDDVEFLENKGFCVLPDPPTPSCLKYTLLYMPHCPTSLYETWLAAYVNDDPRHFIMCGNNLQLYVDNKPSKEIVSTYPNVYKMCTKNYYTRLLFPEFPNVYAFNDLSFHFHDAQSFVEKKQPSKFVDASSVAEHPS.

The protein belongs to the SRR1 family.

Its subcellular location is the cytoplasm. The protein resides in the nucleus. This Schizosaccharomyces pombe (strain 972 / ATCC 24843) (Fission yeast) protein is SRR1-like protein.